A 180-amino-acid chain; its full sequence is Shikimate kinase (180 aa).

An ATP-binding site is contributed by 14–19 (GAGKSC). A Mg(2+)-binding site is contributed by serine 18. Residues aspartate 36, arginine 60, and glycine 82 each contribute to the substrate site. Arginine 120 is an ATP binding site. Arginine 139 is a binding site for substrate.

This sequence belongs to the shikimate kinase family. As to quaternary structure, monomer. Mg(2+) serves as cofactor.

Its subcellular location is the cytoplasm. It catalyses the reaction shikimate + ATP = 3-phosphoshikimate + ADP + H(+). The protein operates within metabolic intermediate biosynthesis; chorismate biosynthesis; chorismate from D-erythrose 4-phosphate and phosphoenolpyruvate: step 5/7. In terms of biological role, catalyzes the specific phosphorylation of the 3-hydroxyl group of shikimic acid using ATP as a cosubstrate. The chain is Shikimate kinase from Xanthomonas oryzae pv. oryzae (strain PXO99A).